A 382-amino-acid polypeptide reads, in one-letter code: MSAYSRPVLLLLCGLLLFTISIAVLNTLVPLWLSHQQLPTWQVGMVSSSYFSGNLVGTLIAGRIIQQLGFNRSYHYSCILFALATCGLMLSVDFWSWLGWRFFAGVACALIWVIVESALLRSGTVTNRGQLLAAYMMVYYLGTVTGQLLLGVVSTQLLSVIPWVSALVITAMLPLLFAHFSHQDSGDVPHIAVWPMLKRRSARLGINGCIISGVLLGSLYGLLPLYLSHQGMSDASVGWWMALLVSSGIIGQWPIGKMADRYGRLLVLRIQVFVVILGSIAILGNYALAPALFILGCAGFTLYPVAMAWACEKVSADKLVAMNQALLMSYTIGSLTGPTMTSLLMQRYSDNLLFIMIAGVALVYLMMLLRKPDQQKTPFAAV.

The next 12 helical transmembrane spans lie at 8-28 (VLLL…LNTL), 41-61 (WQVG…TLIA), 73-93 (SYHY…LSVD), 94-114 (FWSW…IWVI), 133-153 (AAYM…LGVV), 157-177 (LLSV…PLLF), 208-228 (GCII…LYLS), 235-255 (ASVG…QWPI), 274-294 (VVIL…ALFI), 295-315 (LGCA…EKVS), 325-345 (ALLM…SLLM), and 349-369 (SDNL…MMLL).

The protein belongs to the major facilitator superfamily. YcaD (TC 2.A.1.26) family.

The protein localises to the cell inner membrane. This is an uncharacterized protein from Yersinia enterocolitica serotype O:8 / biotype 1B (strain NCTC 13174 / 8081).